We begin with the raw amino-acid sequence, 556 residues long: Bifunctional methyltransferase (556 aa).

The interval 1–310 (MQYSIQKFLN…NRVIEISLIQ (310 aa)) is RF MTase. Residues 148–152 (GTGSG), Asp171, Trp200, and Asn215 each bind S-adenosyl-L-methionine. Position 215 to 218 (215 to 218 (NPPY)) interacts with substrate. Positions 313–556 (RSYARRIGKS…IITKIPPKSY (244 aa)) are tRNA MTase. Residues 348 to 399 (KNYNSCKIKSNYTKFNLEKSKESVSRGAERIKIREHLRTYKEDVANFSSSTS) form an insert region. S-adenosyl-L-methionine contacts are provided by Glu403, Glu428, Asn455, and Asp477. Residue Asp477 is part of the active site. Substrate contacts are provided by Lys481 and Asp513.

In the C-terminal section; belongs to the class I-like SAM-binding methyltransferase superfamily. TrmB family. The protein in the N-terminal section; belongs to the protein N5-glutamine methyltransferase family. PrmC subfamily.

The enzyme catalyses L-glutaminyl-[peptide chain release factor] + S-adenosyl-L-methionine = N(5)-methyl-L-glutaminyl-[peptide chain release factor] + S-adenosyl-L-homocysteine + H(+). It catalyses the reaction guanosine(46) in tRNA + S-adenosyl-L-methionine = N(7)-methylguanosine(46) in tRNA + S-adenosyl-L-homocysteine. Its function is as follows. Methylates the class 1 translation termination release factors RF1/PrfA and RF2/PrfB on the glutamine residue of the universally conserved GGQ motif. Catalyzes the formation of N(7)-methylguanine at position 46 (m7G46) in tRNA. This chain is Bifunctional methyltransferase (prmC/trmB), found in Rickettsia bellii (strain RML369-C).